Consider the following 171-residue polypeptide: AN1-type zinc finger protein 2A (171 aa).

2 consecutive AN1-type zinc fingers follow at residues 4–52 (PDLG…KKDV) and 94–142 (KVFT…SSVS). Zn(2+) contacts are provided by C10, C15, C25, C28, C33, H36, H42, C44, C100, C105, C115, C118, C123, H126, H132, and C134. Residues 135–171 (QAGSSSVSRGRSSASRAAEQKPSGVSWLAQRLRRTVK) are disordered. Residues 136-151 (AGSSSVSRGRSSASRA) show a composition bias toward low complexity.

The protein resides in the cytoplasm. It is found in the nucleus. The sequence is that of AN1-type zinc finger protein 2A (Zfand2a) from Rattus norvegicus (Rat).